The following is a 529-amino-acid chain: Probable DNA helicase MPN_340 (529 aa).

A UvrD-like helicase ATP-binding domain is found at 2–285 (EHLNQEQKAA…FYTTQNYRSI (284 aa)). Residue 23-30 (SGAGTGKT) coordinates ATP.

It belongs to the helicase family. UvrD subfamily.

It carries out the reaction Couples ATP hydrolysis with the unwinding of duplex DNA by translocating in the 3'-5' direction.. The catalysed reaction is ATP + H2O = ADP + phosphate + H(+). In Mycoplasma pneumoniae (strain ATCC 29342 / M129 / Subtype 1) (Mycoplasmoides pneumoniae), this protein is Probable DNA helicase MPN_340.